The sequence spans 514 residues: Membrane-bound lytic murein transglycosylase F (514 aa).

The first 30 residues, 1–30 (MKKLKINYLFIGILTLLLAAALWPSIPWFG), serve as a signal peptide directing secretion. The segment at 31-269 (KTENHIAAIQ…RIEEKYLGHG (239 aa)) is non-LT domain. The segment at 270–514 (DDFDYVDTRS…LFTPQKKEEK (245 aa)) is LT domain. The active site involves glutamate 314.

It in the N-terminal section; belongs to the bacterial solute-binding protein 3 family. The protein in the C-terminal section; belongs to the transglycosylase Slt family.

Its subcellular location is the cell outer membrane. The catalysed reaction is Exolytic cleavage of the (1-&gt;4)-beta-glycosidic linkage between N-acetylmuramic acid (MurNAc) and N-acetylglucosamine (GlcNAc) residues in peptidoglycan, from either the reducing or the non-reducing ends of the peptidoglycan chains, with concomitant formation of a 1,6-anhydrobond in the MurNAc residue.. Murein-degrading enzyme that degrades murein glycan strands and insoluble, high-molecular weight murein sacculi, with the concomitant formation of a 1,6-anhydromuramoyl product. Lytic transglycosylases (LTs) play an integral role in the metabolism of the peptidoglycan (PG) sacculus. Their lytic action creates space within the PG sacculus to allow for its expansion as well as for the insertion of various structures such as secretion systems and flagella. The chain is Membrane-bound lytic murein transglycosylase F from Salmonella paratyphi A (strain ATCC 9150 / SARB42).